Consider the following 285-residue polypeptide: 4-diphosphocytidyl-2-C-methyl-D-erythritol kinase (285 aa).

Lys-9 is a catalytic residue. An ATP-binding site is contributed by 89 to 99 (PLGAGLGGGSS). Asp-131 is a catalytic residue.

Belongs to the GHMP kinase family. IspE subfamily.

The catalysed reaction is 4-CDP-2-C-methyl-D-erythritol + ATP = 4-CDP-2-C-methyl-D-erythritol 2-phosphate + ADP + H(+). Its pathway is isoprenoid biosynthesis; isopentenyl diphosphate biosynthesis via DXP pathway; isopentenyl diphosphate from 1-deoxy-D-xylulose 5-phosphate: step 3/6. Functionally, catalyzes the phosphorylation of the position 2 hydroxy group of 4-diphosphocytidyl-2C-methyl-D-erythritol. This chain is 4-diphosphocytidyl-2-C-methyl-D-erythritol kinase, found in Thermodesulfovibrio yellowstonii (strain ATCC 51303 / DSM 11347 / YP87).